Here is a 204-residue protein sequence, read N- to C-terminus: Proteasome subunit beta type-3-B (204 aa).

It belongs to the peptidase T1B family. In terms of assembly, component of the 20S core complex of the 26S proteasome. The 26S proteasome is composed of a core protease (CP), known as the 20S proteasome, capped at one or both ends by the 19S regulatory particle (RP/PA700). The 20S proteasome core is composed of 28 subunits that are arranged in four stacked rings, resulting in a barrel-shaped structure. The two end rings are each formed by seven alpha subunits, and the two central rings are each formed by seven beta subunits. The catalytic chamber with the active sites is on the inside of the barrel.

It is found in the cytoplasm. Its subcellular location is the nucleus. In terms of biological role, non-catalytic component of the proteasome, a multicatalytic proteinase complex which is characterized by its ability to cleave peptides with Arg, Phe, Tyr, Leu, and Glu adjacent to the leaving group at neutral or slightly basic pH. The proteasome has an ATP-dependent proteolytic activity. The protein is Proteasome subunit beta type-3-B (PBC2) of Arabidopsis thaliana (Mouse-ear cress).